The primary structure comprises 538 residues: MAKMIAYDDEARQGMLAGLDKLADTVKVTLGPKGRNVVLDKTYGAPTITNDGVSIAKEIDLDDPYERIGAELVKEVAKKTDDVAGDGTTTATVLAQSLVHEGLKNVTAGSNPIALRRGIEKAADAIVKELVAAAKDVETKDQIAATATISAADPEVGEKIAEALDKVGQDGVVTVEDNNRFGLDLDFTEGMRFDKGYIAPYFVTNAEDQTAVLEDPYILLTSGKLSSQQDVVHIAELVMKTGKPLLIIAEDVDGEALPTLILNNIRGTFKSCAVKAPGFGDRRKAMLQDMAILTGAQVVSDELGLKLDSVDMSVLGTAKKVIVSKDETTIVSGGGSKEDVAARVAQIRGEIANTDSDYDREKLQERLAKLAGGVAVIKVGAATEVEAKERKHRIEDAVRNAKAAIEEGLLPGGGVALIQAAAKAKDDVKLEGDEATGAAIVFRAVEAPIKQIAENAGLSGDVVIDKVRSLPDGQGLNAATNEYEDLLAAGVTDPVKVTRSALQNAASIAGLFLTTEAVVANKPEPPAAAPAAGADMGY.

ATP contacts are provided by residues 29 to 32 (TLGP), 86 to 90 (DGTTT), Gly413, 477 to 479 (NAA), and Asp493.

It belongs to the chaperonin (HSP60) family. In terms of assembly, forms a cylinder of 14 subunits composed of two heptameric rings stacked back-to-back. Interacts with the co-chaperonin GroES.

The protein resides in the cytoplasm. It catalyses the reaction ATP + H2O + a folded polypeptide = ADP + phosphate + an unfolded polypeptide.. In terms of biological role, together with its co-chaperonin GroES, plays an essential role in assisting protein folding. The GroEL-GroES system forms a nano-cage that allows encapsulation of the non-native substrate proteins and provides a physical environment optimized to promote and accelerate protein folding. In Bifidobacterium adolescentis (strain ATCC 15703 / DSM 20083 / NCTC 11814 / E194a), this protein is Chaperonin GroEL.